The following is a 315-amino-acid chain: Protein-L-isoaspartate O-methyltransferase (315 aa).

Disordered stretches follow at residues 1-47 and 59-89; these read MSGE…KPAA and RALP…AAPK. The segment covering 14-34 has biased composition (basic and acidic residues); it reads EDLKRAPRKSEVRSGSGERHA. Low complexity-rich tracts occupy residues 35–47 and 59–81; these read ASAV…KPAA and RALP…LKPA. Ser162 is a catalytic residue.

It belongs to the methyltransferase superfamily. L-isoaspartyl/D-aspartyl protein methyltransferase family.

The protein resides in the cytoplasm. The catalysed reaction is [protein]-L-isoaspartate + S-adenosyl-L-methionine = [protein]-L-isoaspartate alpha-methyl ester + S-adenosyl-L-homocysteine. Functionally, catalyzes the methyl esterification of L-isoaspartyl residues in peptides and proteins that result from spontaneous decomposition of normal L-aspartyl and L-asparaginyl residues. It plays a role in the repair and/or degradation of damaged proteins. The polypeptide is Protein-L-isoaspartate O-methyltransferase (Burkholderia ambifaria (strain MC40-6)).